The sequence spans 387 residues: Alkanesulfonate monooxygenase (387 aa).

This sequence belongs to the SsuD family.

The enzyme catalyses an alkanesulfonate + FMNH2 + O2 = an aldehyde + FMN + sulfite + H2O + 2 H(+). Functionally, catalyzes the desulfonation of aliphatic sulfonates. This is Alkanesulfonate monooxygenase from Xanthomonas axonopodis pv. citri (strain 306).